Consider the following 330-residue polypeptide: Protein pelota homolog (330 aa).

Belongs to the eukaryotic release factor 1 family. Pelota subfamily. As to quaternary structure, monomer. It depends on a divalent metal cation as a cofactor.

Its subcellular location is the cytoplasm. Its function is as follows. May function in recognizing stalled ribosomes, interact with stem-loop structures in stalled mRNA molecules, and effect endonucleolytic cleavage of the mRNA. May play a role in the release non-functional ribosomes and degradation of damaged mRNAs. Has endoribonuclease activity. The polypeptide is Protein pelota homolog (Pyrobaculum neutrophilum (strain DSM 2338 / JCM 9278 / NBRC 100436 / V24Sta) (Thermoproteus neutrophilus)).